We begin with the raw amino-acid sequence, 272 residues long: NADPH-dependent aldehyde reductase 2, chloroplastic (272 aa).

Residues 1–53 (MAAASSVSSPPLCLAGRVAIVTGSSRGIGRAIAIHLAELGARVVVNYSTSPVE) constitute a chloroplast transit peptide. 26-50 (RGIGRAIAIHLAELGARVVVNYSTS) serves as a coordination point for NADP(+). Position 165 (S165) interacts with substrate. Y179 functions as the Proton acceptor in the catalytic mechanism.

Belongs to the short-chain dehydrogenases/reductases (SDR) family.

The protein localises to the plastid. Its subcellular location is the chloroplast. Aldehyde reductase that catalyzes the reduction of the aldehyde carbonyl groups on saturated and alpha,beta-unsaturated aldehydes with more than 5 carbons. No activity on alpha,beta-unsaturated ketones. Can use propionaldehyde, butyraldehyde, methylglyoxal, (e)-2-pentenal, (E)-2-hexenal, (Z)-3-hexenal and (E)-2-nonenal as substrates, but not propenal (acrolein), crotonaldehyde, 2-butanone, 3-buten-2-one or 1-penten-3-one. This is NADPH-dependent aldehyde reductase 2, chloroplastic from Arabidopsis thaliana (Mouse-ear cress).